A 404-amino-acid chain; its full sequence is CD2 homolog (404 aa).

The N-terminal stretch at 1–16 (MFITLIFLSYINIVLS) is a signal peptide. The Extracellular segment spans residues 17–225 (NNYWARLNET…QNYFLENIHT (209 aa)). 10 N-linked (GlcNAc...) asparagine; by host glycosylation sites follow: Asn24, Asn87, Asn92, Asn96, Asn122, Asn139, Asn167, Asn193, Asn200, and Asn206. Disulfide bonds link Cys140–Cys207 and Cys147–Cys190. A helical membrane pass occupies residues 226–246 (LFYIIIFIVSGLIASIFISII). At 247 to 404 (TFLSLRKRKK…ISLIHVDRII (158 aa)) the chain is on the cytoplasmic side. Positions 260–295 (EIESPPPESNEEEQCQHDDTTSIHEPSPREPLLPKP) are disordered. Basic and acidic residues predominate over residues 273 to 287 (QCQHDDTTSIHEPSP). 7 repeat units span residues 322-327 (NPCPPP), 328-333 (KPCPPP), 334-339 (KPCPPP), 340-345 (KPCPPP), 346-351 (KPCPPP), 352-357 (KPCPPP), and 358-363 (KPCPPP). The interval 322-363 (NPCPPPKPCPPPKPCPPPKPCPPPKPCPPPKPCPPPKPCPPP) is 7 X 6 AA tandem repeats of [KN]-P-C-P-P-P. Positions 357 to 388 (PKPCPPPKPCSSPESYSPPKPLPSIPLLPNIP) are enriched in pro residues. The segment at 357–390 (PKPCPPPKPCSSPESYSPPKPLPSIPLLPNIPPL) is disordered.

Belongs to the asfivirus CD2 homolog protein family. As to quaternary structure, both glycosylated and nonglycosylated forms interact (via C-terminus) with the host AP-1 complex. Cleaved into two fragments of 63 kDa and 26 kDa containing respectively the glycosylated N-terminus and the nonglycosylated C-terminus. A full-length 89-kDa glycosylated form also exists.

Its subcellular location is the host membrane. It localises to the virion membrane. The protein localises to the host Golgi apparatus. Functionally, may play an immunosuppressive role by inhibiting lymphocyte proliferation and subsequently facilitating viral replication and generalization of infection. Responsible for viral hemadsorption, which may help viral spread. Increases virus replication in the tick vector at the step of virus uptake or replication in the tick gut. May play a role in the host Golgi reorganization to yield viral factories. May play a role in host cell penetration. This is CD2 homolog from African swine fever virus (isolate Tick/South Africa/Pretoriuskop Pr4/1996) (ASFV).